The following is a 483-amino-acid chain: Glycogen synthase (483 aa).

Lys-15 is an ADP-alpha-D-glucose binding site.

This sequence belongs to the glycosyltransferase 1 family. Bacterial/plant glycogen synthase subfamily.

It carries out the reaction [(1-&gt;4)-alpha-D-glucosyl](n) + ADP-alpha-D-glucose = [(1-&gt;4)-alpha-D-glucosyl](n+1) + ADP + H(+). Its pathway is glycan biosynthesis; glycogen biosynthesis. Its function is as follows. Synthesizes alpha-1,4-glucan chains using ADP-glucose. This is Glycogen synthase from Thioalkalivibrio sulfidiphilus (strain HL-EbGR7).